We begin with the raw amino-acid sequence, 360 residues long: (+)-6a-hydroxymaackiain 3-O-methyltransferase 2 (360 aa).

Residues 202–205 (VAGG), D226, 226–227 (DQ), 246–247 (DM), and K260 each bind S-adenosyl-L-methionine. Catalysis depends on H264, which acts as the Proton acceptor.

Belongs to the class I-like SAM-binding methyltransferase superfamily. Cation-independent O-methyltransferase family. COMT subfamily.

The catalysed reaction is (+)-6a-hydroxymaackiain + S-adenosyl-L-methionine = (+)-pisatin + S-adenosyl-L-homocysteine + H(+). 3-O-methyltransferase involved in the phytoalexin pisatin biosynthesis. Can use (+)-6a-hydroxymaackiain, (+)-maackiain and with a lower activity (+)-medicarpin and 2,7,4'-trihydroxyisoflavanone as substrates, but not (-)-6a-hydroxymaackiain, daidzein, formononetin or isoliquiritigenin. The sequence is that of (+)-6a-hydroxymaackiain 3-O-methyltransferase 2 (HMM2) from Pisum sativum (Garden pea).